Reading from the N-terminus, the 98-residue chain is N(2)-fixation sustaining protein CowN (98 aa).

Belongs to the CowN family.

Functionally, is required to sustain N(2)-dependent growth in the presence of low levels of carbon monoxide (CO). Probably acts by protecting the N(2) fixation ability of the nitrogenase complex, which is inactivated in the presence of CO. The protein is N(2)-fixation sustaining protein CowN of Trichlorobacter lovleyi (strain ATCC BAA-1151 / DSM 17278 / SZ) (Geobacter lovleyi).